The primary structure comprises 620 residues: Toxin coregulated pilus biosynthesis protein I (620 aa).

The Methyl-accepting transducer domain occupies 344-580 (TMNDLSIKQT…DVAKQMEDIR (237 aa)).

This sequence belongs to the methyl-accepting chemotaxis (MCP) protein family.

Its subcellular location is the cell inner membrane. Its function is as follows. May function as an environmental regulator of TCP biogenesis. Negatively regulates the synthesis of the major pilin subunit of TCP (TcpA). The polypeptide is Toxin coregulated pilus biosynthesis protein I (tcpI) (Vibrio cholerae serotype O1 (strain ATCC 39541 / Classical Ogawa 395 / O395)).